Reading from the N-terminus, the 171-residue chain is Putative RING finger protein 027R (171 aa).

The RING-type zinc finger occupies 121 to 163 (CAVCMTNPVWVDFVWSCKHISTCIKCLKMLSRGSNGFKCPICR).

This sequence belongs to the IIV-6 157L family.

This is Putative RING finger protein 027R from Aedes vexans (Inland floodwater mosquito).